A 144-amino-acid chain; its full sequence is uncharacterized protein (144 aa).

The next 2 helical transmembrane spans lie at 76–96 and 105–125; these read LLSA…VTML and ILRA…VKSY.

It belongs to the RseC family.

The protein resides in the cell inner membrane. This is an uncharacterized protein from Haemophilus influenzae (strain ATCC 51907 / DSM 11121 / KW20 / Rd).